The primary structure comprises 212 residues: Probable GTP-binding protein EngB (212 aa).

Residues 25–199 (FGYEVAFAGR…WAKLDEWMEY (175 aa)) enclose the EngB-type G domain. GTP-binding positions include 33–40 (GRSNAGKS), 60–64 (GRTQL), 78–81 (DLPG), 145–148 (TKSD), and 178–180 (FSS). Residues Ser-40 and Thr-62 each coordinate Mg(2+).

Belongs to the TRAFAC class TrmE-Era-EngA-EngB-Septin-like GTPase superfamily. EngB GTPase family. Requires Mg(2+) as cofactor.

Necessary for normal cell division and for the maintenance of normal septation. The polypeptide is Probable GTP-binding protein EngB (Hydrogenovibrio crunogenus (strain DSM 25203 / XCL-2) (Thiomicrospira crunogena)).